The following is a 1040-amino-acid chain: Multidrug resistance protein MdtB (1040 aa).

12 helical membrane passes run Leu-25–Ala-45, Leu-347–Ala-367, Ile-369–Leu-389, Leu-396–Ile-416, Ile-440–Phe-460, Phe-472–Pro-492, Trp-537–Ile-557, Leu-863–Val-883, Phe-888–Ala-908, Ile-910–Ile-930, Ile-968–Val-988, and Ile-998–Ile-1018.

It belongs to the resistance-nodulation-cell division (RND) (TC 2.A.6) family. MdtB subfamily. In terms of assembly, part of a tripartite efflux system composed of MdtA, MdtB and MdtC. MdtB forms a heteromultimer with MdtC.

Its subcellular location is the cell inner membrane. The sequence is that of Multidrug resistance protein MdtB from Salmonella schwarzengrund (strain CVM19633).